A 336-amino-acid polypeptide reads, in one-letter code: MEPQAKRKKEMDDYDDTWEVLPVLSDEQSQDPELLPAYAAPILERRETSRLVKELSLIHPLPNLQHIKRVRPCKHKDSPHPLEVIVCLVSDVQCTDPKKVTLSHLLHTQCFNSNGLGDPFIVQIPANPPLTRPQFEKASKHWPTSFHEDKLVTFALKGQLFTAHQKTKMREYMCVAVKAAKSGRELGMDAVGAVIVDPKTEQIIAVAHDCKRGSHPLHHAVMVCIDLVACGQDGGAYNYEKYPACRFSCSNSVCDGKETGLPYICTGYDLYVTREPCVMCAMALVHSRISRVFYGASTADGAFGSRYKIHCQKDLNHRFEVFKGVMVNACEDLCKE.

One can recognise a CMP/dCMP-type deaminase domain in the interval 167-322 (TKMREYMCVA…KDLNHRFEVF (156 aa)). Positions 219, 277, and 280 each coordinate Zn(2+).

Belongs to the cytidine and deoxycytidylate deaminase family. ADAT3 subfamily. Requires Zn(2+) as cofactor.

This Danio rerio (Zebrafish) protein is Probable inactive tRNA-specific adenosine deaminase-like protein 3 (adat3).